Reading from the N-terminus, the 283-residue chain is 32 kDa beta-galactoside-binding lectin (283 aa).

2 Galectin domains span residues 17 to 148 (YRSL…VHWG) and 156 to 283 (YESG…IQIQ). Position 217-223 (217-223 (WGNEERE)) interacts with a beta-D-galactoside.

In terms of assembly, (Microbial infection) Interacts (via domain galectin 2) with goat TMEM147. Interacts (via domain galectin 1) with goat TMEM63A.

It localises to the membrane. In terms of biological role, binds galactose. Exerts immunomodulatory effects on host peripheral blood mononuclear cells to down-regulate host immune response. Hemagglutinates human, dog, rabbit, chicken and mouse erythrocytes but does not hemagglutinate the erythrocytes of goat, its natural host. The protein is 32 kDa beta-galactoside-binding lectin (GAL-1) of Haemonchus contortus (Barber pole worm).